The sequence spans 208 residues: Uracil phosphoribosyltransferase (208 aa).

Residues R78, R103, and 130–138 contribute to the 5-phospho-alpha-D-ribose 1-diphosphate site; that span reads DPMFATGGT. Uracil-binding positions include I193 and 198 to 200; that span reads GDA. D199 serves as a coordination point for 5-phospho-alpha-D-ribose 1-diphosphate.

Belongs to the UPRTase family. Mg(2+) is required as a cofactor.

The enzyme catalyses UMP + diphosphate = 5-phospho-alpha-D-ribose 1-diphosphate + uracil. Its pathway is pyrimidine metabolism; UMP biosynthesis via salvage pathway; UMP from uracil: step 1/1. With respect to regulation, allosterically activated by GTP. Its function is as follows. Catalyzes the conversion of uracil and 5-phospho-alpha-D-ribose 1-diphosphate (PRPP) to UMP and diphosphate. This is Uracil phosphoribosyltransferase from Campylobacter jejuni (strain RM1221).